Here is a 125-residue protein sequence, read N- to C-terminus: MKSPALAGSLATAEVPCTHPDTTARFFRALADPTRLKLLQFILRGERTSAECVEHAGISQPRVSVHLSCLVDCGYVSARRDGKKLRYSVGDPRVADLVMLARCLAADNAAALDCCTRIPGEGEQR.

In terms of domain architecture, HTH arsR-type spans 15–109; that stretch reads VPCTHPDTTA…LARCLAADNA (95 aa). A DNA-binding region (H-T-H motif) is located at residues 49-68; the sequence is SAECVEHAGISQPRVSVHLS. Positions 69, 73, and 114 each coordinate Hg(2+).

Negatively regulates the mercuric reductase merA and the organolyase merB in the absence of mercuric ions. The protein is Probable mercury resistance operon repressor (merR) of Streptomyces lividans.